A 488-amino-acid chain; its full sequence is Ribulose bisphosphate carboxylase large chain (488 aa).

The substrate site is built by Asn127 and Thr177. Lys179 (proton acceptor) is an active-site residue. Lys181 is a substrate binding site. Mg(2+)-binding residues include Lys205, Asp207, and Glu208. Position 205 is an N6-carboxylysine (Lys205). Catalysis depends on His297, which acts as the Proton acceptor. Arg298, His330, and Ser382 together coordinate substrate.

It belongs to the RuBisCO large chain family. Type I subfamily. Heterohexadecamer of 8 large chains and 8 small chains. The cofactor is Mg(2+).

Its subcellular location is the plastid. The protein resides in the chloroplast. The enzyme catalyses 2 (2R)-3-phosphoglycerate + 2 H(+) = D-ribulose 1,5-bisphosphate + CO2 + H2O. It carries out the reaction D-ribulose 1,5-bisphosphate + O2 = 2-phosphoglycolate + (2R)-3-phosphoglycerate + 2 H(+). RuBisCO catalyzes two reactions: the carboxylation of D-ribulose 1,5-bisphosphate, the primary event in carbon dioxide fixation, as well as the oxidative fragmentation of the pentose substrate in the photorespiration process. Both reactions occur simultaneously and in competition at the same active site. This Cyanidioschyzon merolae (strain NIES-3377 / 10D) (Unicellular red alga) protein is Ribulose bisphosphate carboxylase large chain.